The primary structure comprises 424 residues: Tyrosine--tRNA ligase (424 aa).

Position 37 (Tyr37) interacts with L-tyrosine. The short motif at 42-51 (ITADSLHVGH) is the 'HIGH' region element. L-tyrosine-binding residues include Tyr175 and Gln179. Residues 235–239 (KFGKT) carry the 'KMSKS' region motif. Lys238 contacts ATP. The S4 RNA-binding domain occupies 356-414 (GNLQQLLVYSRLALSRSHAKSMIVSNSVRINNIIQNNPFYILCNRDKMYHKYTLLSRGK).

This sequence belongs to the class-I aminoacyl-tRNA synthetase family. TyrS type 1 subfamily. In terms of assembly, homodimer.

It is found in the cytoplasm. The enzyme catalyses tRNA(Tyr) + L-tyrosine + ATP = L-tyrosyl-tRNA(Tyr) + AMP + diphosphate + H(+). Functionally, catalyzes the attachment of tyrosine to tRNA(Tyr) in a two-step reaction: tyrosine is first activated by ATP to form Tyr-AMP and then transferred to the acceptor end of tRNA(Tyr). The sequence is that of Tyrosine--tRNA ligase from Buchnera aphidicola subsp. Baizongia pistaciae (strain Bp).